Reading from the N-terminus, the 91-residue chain is uncharacterized protein (91 aa).

The next 2 membrane-spanning stretches (helical) occupy residues 10–30 (VLFTAPGLIVGALAIGAAGGI) and 46–66 (LLVAVLFVGAFTGIMVEQALS). The disordered stretch occupies residues 68 to 91 (MRRQDGARGTARAGRNSARRRMPS).

The protein resides in the cell membrane. This is an uncharacterized protein from Sinorhizobium fredii (strain NBRC 101917 / NGR234).